A 67-amino-acid chain; its full sequence is MPQLDTSTWSITIMSMIMTLFIVFQLKISKYLYPSNPEPKSMTTLKQLNPWEKKWTKIYSPLSLPQQ.

A helical transmembrane segment spans residues 8–24 (TWSITIMSMIMTLFIVF). N6-acetyllysine; alternate is present on Lys54. Residue Lys54 is modified to N6-succinyllysine; alternate. The residue at position 57 (Lys57) is an N6-acetyllysine.

This sequence belongs to the ATPase protein 8 family. F-type ATPases have 2 components, CF(1) - the catalytic core - and CF(0) - the membrane proton channel. Component of an ATP synthase complex composed of ATP5PB, ATP5MC1, ATP5F1E, ATP5PD, ATP5ME, ATP5PF, ATP5MF, MT-ATP6, MT-ATP8, ATP5F1A, ATP5F1B, ATP5F1D, ATP5F1C, ATP5PO, ATP5MG, ATP5MK and ATP5MJ. Interacts with PRICKLE3.

The protein resides in the mitochondrion membrane. Mitochondrial membrane ATP synthase (F(1)F(0) ATP synthase or Complex V) produces ATP from ADP in the presence of a proton gradient across the membrane which is generated by electron transport complexes of the respiratory chain. F-type ATPases consist of two structural domains, F(1) - containing the extramembraneous catalytic core and F(0) - containing the membrane proton channel, linked together by a central stalk and a peripheral stalk. During catalysis, ATP synthesis in the catalytic domain of F(1) is coupled via a rotary mechanism of the central stalk subunits to proton translocation. Part of the complex F(0) domain. Minor subunit located with subunit a in the membrane. The protein is ATP synthase protein 8 (MT-ATP8) of Felis silvestris lybica (African wildcat).